We begin with the raw amino-acid sequence, 272 residues long: PHD finger protein ALFIN-LIKE 6 (272 aa).

Gly residues predominate over residues 1 to 23 (MEGGGGGGGGGGGGGGGGGGGGA). 2 disordered regions span residues 1–24 (MEGG…GGAP) and 162–218 (QAKE…DNTL). Positions 168 to 182 (PNSSSKSNKPSSKVQ) are enriched in low complexity. The segment covering 183–200 (SKAESRSKSKLSAPKDEE) has biased composition (basic and acidic residues). Acidic residues predominate over residues 201 to 214 (GSGDDEGEEEEDDH). Residues 216–268 (NTLCGTCGTNDGKDEFWICCDNCEKWYHGKCVKITPARAEHIKQYKCPDCTNK) form a PHD-type zinc finger.

This sequence belongs to the Alfin family.

It is found in the nucleus. In terms of biological role, histone-binding component that specifically recognizes H3 tails trimethylated on 'Lys-4' (H3K4me3), which mark transcription start sites of virtually all active genes. The sequence is that of PHD finger protein ALFIN-LIKE 6 from Oryza sativa subsp. indica (Rice).